Reading from the N-terminus, the 114-residue chain is Snake venom vascular endothelial growth factor (114 aa).

Q1 bears the Pyrrolidone carboxylic acid mark. Intrachain disulfides connect C14/C56, C45/C91, and C49/C93. The disordered stretch occupies residues 92-114 (ECRPGSTVNNGKRKKNPKEGEPR).

This sequence belongs to the PDGF/VEGF growth factor family. Snake venom VEGF subfamily. As to quaternary structure, homodimer; disulfide-linked. Interacts with human VEGF receptor 1/FLT1. Interacts with human VEGF receptor 2/KDR. In terms of tissue distribution, expressed by venom gland.

Its subcellular location is the secreted. In terms of biological role, snake venom vascular endothelial growth factor (svVEGF) that may contribute to venom dispersion and prey subjugation by inducing vascular permeability and hypotension. Induces an increase in capillary permeability after intradermal injection, as well as a drastic hypotensive effect after intravenous injection. The hypotension is mediated by nitric oxide (NO), which is produced by VEGF-activated endothelium NO synthase. Induces angiogenesis and migration of human vascular endothelial cells in vitro. Exhibits angiogenic activity by inducing human umbilical vein endothelial cells (HUVEC) to develop vessels in vitro. Induces cellular migration of HUVEC cells towards a wound in scratch assays, enhancing wound closure after 12 h by 49.5%. Induces dose-dependent leukocyte recruitment to the peritoneal cavity leading to increased vascular permeability in mice. The chain is Snake venom vascular endothelial growth factor from Crotalus durissus terrificus (South American rattlesnake).